Reading from the N-terminus, the 442-residue chain is Matrix remodeling-associated protein 8 (442 aa).

The signal sequence occupies residues methionine 1–alanine 19. Over valine 20–glutamine 340 the chain is Extracellular. 2 Ig-like V-type domains span residues proline 25–threonine 156 and proline 159–threonine 291. 2 disulfide bridges follow: cysteine 53/cysteine 136 and cysteine 185/cysteine 271. Asparagine 118 is a glycosylation site (N-linked (GlcNAc...) asparagine). An RGD 1 motif is present at residues arginine 128–aspartate 130. The residue at position 227 (serine 227) is a Phosphoserine. The RGD 2 signature appears at arginine 251–aspartate 253. Residues glutamate 296–leucine 319 form a disordered region. An N-linked (GlcNAc...) asparagine glycan is attached at asparagine 305. A helical membrane pass occupies residues leucine 341–alanine 361. The Cytoplasmic portion of the chain corresponds to threonine 362–lysine 442.

In terms of assembly, homodimer in cis. Does not appear to form trans-homodimers. Interacts with ITGB3; the interaction inhibits ITGAV:ITGB3 heterodimer formation. As to expression, widely expressed (at protein level). Highly expressed in brain where it localizes to the glia limitans, which is formed by the endfeet of astrocytes surrounding capillaries, and beneath the pia mater (at protein level). In lung, detected in epithelial cells of the bronchus (at protein level). Expressed in intercalated disks in the heart (at protein level). Detected in pancreatic alpha-cells in the islet of Langerhans (at protein level). In kidney, found in the brush border of the proximal convoluted tubule (at protein level). Expressed in the epithelium of the small intestine (at protein level). Weakly expressed in liver (at protein level). Detected in myeloid cells.

The protein localises to the cell membrane. Its subcellular location is the cell junction. It is found in the tight junction. It localises to the cytoplasm. The protein resides in the cell projection. The protein localises to the cilium membrane. Its subcellular location is the nucleus. In terms of biological role, transmembrane protein which can modulate activity of various signaling pathways, probably via binding to integrin ITGAV:ITGB3. Mediates heterophilic cell-cell interactions in vitro. Inhibits osteoclastogenesis downstream of TNFSF11/RANKL and CSF1, where it may function by attenuating signaling via integrin ITGB3 and MAP kinase p38. Plays a role in cartilage formation where it promotes proliferation and maturation of growth plate chondrocytes. Stimulates formation of primary cilia in chondrocytes. Enhances expression of genes involved in the hedgehog signaling pathway in chondrocytes, including the hedgehog signaling molecule IHH; may also promote signaling via the PTHLH/PTHrP pathway. Plays a role in angiogenesis where it suppresses migration of endothelial cells and also promotes their apoptosis. Inhibits VEGF-induced activation of AKT and p38 MAP kinase in endothelial cells. Also inhibits VTN (vitronectin)-mediated integrin ITGAV:ITGB3 signaling and activation of PTK2/FAK. May play a role in the maturation and maintenance of the blood-brain barrier. This chain is Matrix remodeling-associated protein 8, found in Mus musculus (Mouse).